The primary structure comprises 336 residues: Phosphate acyltransferase (336 aa).

This sequence belongs to the PlsX family. In terms of assembly, homodimer. Probably interacts with PlsY.

Its subcellular location is the cytoplasm. It carries out the reaction a fatty acyl-[ACP] + phosphate = an acyl phosphate + holo-[ACP]. Its pathway is lipid metabolism; phospholipid metabolism. Its function is as follows. Catalyzes the reversible formation of acyl-phosphate (acyl-PO(4)) from acyl-[acyl-carrier-protein] (acyl-ACP). This enzyme utilizes acyl-ACP as fatty acyl donor, but not acyl-CoA. The sequence is that of Phosphate acyltransferase from Ectopseudomonas mendocina (strain ymp) (Pseudomonas mendocina).